Reading from the N-terminus, the 144-residue chain is Large-conductance mechanosensitive channel (144 aa).

Helical transmembrane passes span 21–41 and 76–96; these read VGII…ANVI and GIFL…FCII. The segment at 105–144 is disordered; it reads QRGGKTRRAVQTECGRDAAYRDPRSLETTKQRHGAGYNDD. The segment covering 118 to 134 has biased composition (basic and acidic residues); it reads CGRDAAYRDPRSLETTK.

This sequence belongs to the MscL family. As to quaternary structure, homopentamer.

It is found in the cell inner membrane. In terms of biological role, channel that opens in response to stretch forces in the membrane lipid bilayer. May participate in the regulation of osmotic pressure changes within the cell. This chain is Large-conductance mechanosensitive channel, found in Sodalis glossinidius (strain morsitans).